The chain runs to 286 residues: DNA-directed RNA polymerase subunit Rpo3 (286 aa).

The protein belongs to the archaeal Rpo3/eukaryotic RPB3 RNA polymerase subunit family. As to quaternary structure, part of the RNA polymerase complex.

The protein localises to the cytoplasm. The enzyme catalyses RNA(n) + a ribonucleoside 5'-triphosphate = RNA(n+1) + diphosphate. Functionally, DNA-dependent RNA polymerase (RNAP) catalyzes the transcription of DNA into RNA using the four ribonucleoside triphosphates as substrates. This chain is DNA-directed RNA polymerase subunit Rpo3, found in Aeropyrum pernix (strain ATCC 700893 / DSM 11879 / JCM 9820 / NBRC 100138 / K1).